Consider the following 320-residue polypeptide: Biotin synthase (320 aa).

The 230-residue stretch at 45–274 (NDLQKASLLS…DSRIRLSAGR (230 aa)) folds into the Radical SAM core domain. The [4Fe-4S] cluster site is built by Cys-60, Cys-64, and Cys-67. [2Fe-2S] cluster contacts are provided by Cys-105, Cys-137, Cys-197, and Arg-269.

The protein belongs to the radical SAM superfamily. Biotin synthase family. As to quaternary structure, homodimer. [4Fe-4S] cluster serves as cofactor. It depends on [2Fe-2S] cluster as a cofactor.

It catalyses the reaction (4R,5S)-dethiobiotin + (sulfur carrier)-SH + 2 reduced [2Fe-2S]-[ferredoxin] + 2 S-adenosyl-L-methionine = (sulfur carrier)-H + biotin + 2 5'-deoxyadenosine + 2 L-methionine + 2 oxidized [2Fe-2S]-[ferredoxin]. It participates in cofactor biosynthesis; biotin biosynthesis; biotin from 7,8-diaminononanoate: step 2/2. Catalyzes the conversion of dethiobiotin (DTB) to biotin by the insertion of a sulfur atom into dethiobiotin via a radical-based mechanism. The protein is Biotin synthase of Beijerinckia indica subsp. indica (strain ATCC 9039 / DSM 1715 / NCIMB 8712).